A 484-amino-acid chain; its full sequence is MATSAAARFLAALAGAAVLLVLLGGAAGAVVGHDDDAAAARRTMEEFAGFPASDYRGDGGGGSGGSSPFYVDSDGLQRQIDELASFSDSPVPSVTRVLYSDKDVQARRYIKGIMNQLGLSIREDAVGNIFGRWEGSEAGLGAVATGSHVDAIPFSGKYDGVVGVLGALEAIRMLKRSGFQPKRSLEVIMFTSEEPTRFGISCLGSRLMAGSEELARSLKETVDNQNVSFFDAADSAGYKMHPEELHNVFLKKDDYFAFVELHIEQGPILEKEGIKIGVVTAIAAPASIKVEFEGNGGHAGAVLMPARNDAGLAAAELALAVEKHVLESGSIDTVGTVGILQLHPGAINSIPSKSHVEIDVRDIDEKRRNNVIEKVHQSAIEISKNRGVLLSEFKIINQDPPALSDKSVISAMEFAAKQLNLEYKLMISRAYHDSLFMARISPMGMIFIPCYKGYSHKPEEYASPEDMANGVKVLALAMARLSLQ.

The N-terminal stretch at Met1–Gly28 is a signal peptide. The Mn(2+) site is built by His148, Asp159, Glu194, and His262. Substrate stretches follow at residues Glu193 to Glu194 and His262 to Gln265. The segment at Ala284–Asp399 is involved in dimerization. Residues His298, Asn348, and Arg361 each coordinate substrate. The interval Tyr431–His432 is substrate. Residue His456 coordinates Mn(2+). A substrate-binding site is contributed by His456.

It belongs to the peptidase M20 family. As to quaternary structure, homodimer. The cofactor is Mn(2+). It depends on Ni(2+) as a cofactor. Co(2+) serves as cofactor.

The protein localises to the endoplasmic reticulum. The catalysed reaction is (S)-ureidoglycolate + H2O + 2 H(+) = glyoxylate + 2 NH4(+) + CO2. It participates in nitrogen metabolism; (S)-allantoin degradation; glyoxylate from (S)-ureidoglycolate: step 1/1. Involved in the catabolism of purine nucleotides. The sequential activity of AAH, UGLYAH and UAH allows a complete purine breakdown without the intermediate generation of urea. The protein is Ureidoglycolate hydrolase of Oryza sativa subsp. japonica (Rice).